The sequence spans 427 residues: UPF0415 protein C7orf25 homolog (427 aa).

Positions 200-234 (GGEEEDEEDQEGDHEDLVEEEEDGEDDNDDDSDDT) are enriched in acidic residues. The interval 200-236 (GGEEEDEEDQEGDHEDLVEEEEDGEDDNDDDSDDTDL) is disordered.

Belongs to the UPF0415 family.

The polypeptide is UPF0415 protein C7orf25 homolog (Danio rerio (Zebrafish)).